A 454-amino-acid chain; its full sequence is Asparagine--tRNA ligase (454 aa).

This sequence belongs to the class-II aminoacyl-tRNA synthetase family. As to quaternary structure, homodimer.

It localises to the cytoplasm. The enzyme catalyses tRNA(Asn) + L-asparagine + ATP = L-asparaginyl-tRNA(Asn) + AMP + diphosphate + H(+). This is Asparagine--tRNA ligase from Microcystis aeruginosa (strain NIES-843 / IAM M-2473).